We begin with the raw amino-acid sequence, 505 residues long: AMP phosphorylase 2 (505 aa).

Residues glycine 169, 195–200, threonine 204, serine 265, and lysine 289 contribute to the AMP site; that span reads SRAITT.

It belongs to the thymidine/pyrimidine-nucleoside phosphorylase family. Type 2 subfamily.

It carries out the reaction AMP + phosphate = alpha-D-ribose 1,5-bisphosphate + adenine. The catalysed reaction is CMP + phosphate = cytosine + alpha-D-ribose 1,5-bisphosphate. It catalyses the reaction UMP + phosphate = alpha-D-ribose 1,5-bisphosphate + uracil. Functionally, catalyzes the conversion of AMP and phosphate to adenine and ribose 1,5-bisphosphate (R15P). Exhibits phosphorylase activity toward CMP and UMP in addition to AMP. Functions in an archaeal AMP degradation pathway, together with R15P isomerase and RubisCO. In Archaeoglobus fulgidus (strain ATCC 49558 / DSM 4304 / JCM 9628 / NBRC 100126 / VC-16), this protein is AMP phosphorylase 2.